The primary structure comprises 42 residues: Photosystem II reaction center protein J (42 aa).

A helical membrane pass occupies residues 12 to 32 (LWFVGMIVGLAALGLLGIFFY).

Belongs to the PsbJ family. In terms of assembly, PSII is composed of 1 copy each of membrane proteins PsbA, PsbB, PsbC, PsbD, PsbE, PsbF, PsbH, PsbI, PsbJ, PsbK, PsbL, PsbM, PsbT, PsbX, PsbY, PsbZ, Psb30/Ycf12, at least 3 peripheral proteins of the oxygen-evolving complex and a large number of cofactors. It forms dimeric complexes.

The protein resides in the plastid. Its subcellular location is the chloroplast thylakoid membrane. In terms of biological role, one of the components of the core complex of photosystem II (PSII). PSII is a light-driven water:plastoquinone oxidoreductase that uses light energy to abstract electrons from H(2)O, generating O(2) and a proton gradient subsequently used for ATP formation. It consists of a core antenna complex that captures photons, and an electron transfer chain that converts photonic excitation into a charge separation. This chain is Photosystem II reaction center protein J, found in Nephroselmis olivacea (Green alga).